The following is a 477-amino-acid chain: AAA-ATPase At3g28600 (477 aa).

Positions 1–26 (MMMGNTFGSSLASLFFLWATIQQIFP) are cleaved as a signal peptide. Residue 245-252 (GPPGTGKS) participates in ATP binding.

This sequence belongs to the AAA ATPase family. BCS1 subfamily. Mg(2+) serves as cofactor.

The catalysed reaction is ATP + H2O = ADP + phosphate + H(+). The sequence is that of AAA-ATPase At3g28600 from Arabidopsis thaliana (Mouse-ear cress).